A 351-amino-acid chain; its full sequence is Methylthioribose-1-phosphate isomerase (351 aa).

The Proton donor role is filled by Asp244.

This sequence belongs to the eIF-2B alpha/beta/delta subunits family. MtnA subfamily.

It is found in the cytoplasm. Its subcellular location is the nucleus. The catalysed reaction is 5-(methylsulfanyl)-alpha-D-ribose 1-phosphate = 5-(methylsulfanyl)-D-ribulose 1-phosphate. The protein operates within amino-acid biosynthesis; L-methionine biosynthesis via salvage pathway; L-methionine from S-methyl-5-thio-alpha-D-ribose 1-phosphate: step 1/6. Catalyzes the interconversion of methylthioribose-1-phosphate (MTR-1-P) into methylthioribulose-1-phosphate (MTRu-1-P). The polypeptide is Methylthioribose-1-phosphate isomerase (Anopheles gambiae (African malaria mosquito)).